A 422-amino-acid chain; its full sequence is MFALCDVNAFYASCETVFRPDLWGKPVVVLSNNDGCVIARNAEAKALGVKMGDPWFKQKDLFRRCGVVCFSSNYELYADMSNRVMSTLEELSPRVEIYSIDEAFCDLTGVRNCRDLTDFGREIRATVLQRTHLTVGVGIAQTKTLAKLANHAAKKWQRQTGGVVDLSNLERQRKLMSALPVDDVWGIGRRISKKLDAMGIKTVLDLADTDIRFIRKHFNVVLERTVRELRGEPCLQLEEFAPTKQEIICSRSFGERITDYPSMRQAICSYAARAAEKLRSEHQYCRFISTFIKTSPFALNEPYYGNSASVKLLTPTQDSRDIINAATRSLDAIWQAGHRYQKAGVMLGDFFSQGVAQLNLFDDNAPRPGSEQLMTVMDTLNAKEGRGTLYFAGQGIQQQWQMKRAMLSPRYTTRSSDLLRVK.

One can recognise a UmuC domain in the interval 2-188 (FALCDVNAFY…LPVDDVWGIG (187 aa)).

Belongs to the DNA polymerase type-Y family.

Involved in UV protection and mutation. Poorly processive, error-prone DNA polymerase involved in translesion repair. Essential for induced (or SOS) mutagenesis. Able to replicate DNA across DNA lesions (thymine photodimers and abasic sites, translesion synthesis) in the presence of activated RecA; efficiency is maximal in the presence of the beta sliding-clamp and clamp-loading complex of DNA polymerase III plus single-stranded binding protein (SSB). RecA and to a lesser extent the beta clamp-complex may target Pol V to replication complexes stalled at DNA template lesions. The sequence is that of Protein UmuC (umuC) from Escherichia coli (strain K12).